A 489-amino-acid polypeptide reads, in one-letter code: 3-octaprenyl-4-hydroxybenzoate carboxy-lyase (489 aa).

Position 172 (asparagine 172) interacts with Mn(2+). Residues 175-177 (IYR), 189-191 (RWL), and 194-195 (RG) contribute to the prenylated FMN site. Mn(2+) is bound at residue glutamate 238. Aspartate 287 serves as the catalytic Proton donor.

It belongs to the UbiD family. In terms of assembly, homohexamer. The cofactor is prenylated FMN. Mn(2+) serves as cofactor.

Its subcellular location is the cell membrane. It catalyses the reaction a 4-hydroxy-3-(all-trans-polyprenyl)benzoate + H(+) = a 2-(all-trans-polyprenyl)phenol + CO2. It participates in cofactor biosynthesis; ubiquinone biosynthesis. In terms of biological role, catalyzes the decarboxylation of 3-octaprenyl-4-hydroxy benzoate to 2-octaprenylphenol, an intermediate step in ubiquinone biosynthesis. In Salmonella arizonae (strain ATCC BAA-731 / CDC346-86 / RSK2980), this protein is 3-octaprenyl-4-hydroxybenzoate carboxy-lyase.